The following is a 239-amino-acid chain: Fatty acid metabolism regulator protein (239 aa).

Positions Lys6–Phe74 constitute an HTH gntR-type domain. A DNA-binding region (H-T-H motif) is located at residues Glu34–Gln53.

Homodimer.

It localises to the cytoplasm. Functionally, multifunctional regulator of fatty acid metabolism. The chain is Fatty acid metabolism regulator protein from Shewanella halifaxensis (strain HAW-EB4).